Reading from the N-terminus, the 1897-residue chain is 1,3-beta-glucan synthase component FKS1 (1897 aa).

Residues 1 to 106 (MSGYPAGHYE…SETFSDFTMR (106 aa)) form a disordered region. The span at 8 to 29 (HYEDGYGHQEHGGDAYYQDEHG) shows a compositional bias: basic and acidic residues. A compositionally biased stretch (low complexity) spans 74 to 83 (GDQYYDQGNG). 17 helical membrane-spanning segments follow: residues 487–507 (IWVI…PTLY), 525–545 (WSAV…ATLC), 564–584 (LMFL…VFGF), 591–611 (TICL…FFFF), 655–675 (LWIC…TLSL), 707–727 (ILLG…SYLW), 728–748 (YVIC…VSIW), 1329–1349 (NMFI…LGAL), 1386–1406 (CVVS…VQEL), 1473–1493 (FAGP…FATS), 1497–1517 (TPAL…PFLF), 1588–1608 (IFFS…VPYL), 1630–1650 (IAIV…MFFG), 1666–1686 (FGAV…LVIF), 1701–1721 (VLGM…IISL), 1766–1786 (FSAD…ALCI), and 1826–1846 (FAIL…APLV).

It belongs to the glycosyltransferase 48 family. Component of the 1,3-beta-glucan synthase (GS) complex composed of a catalytic subunit fksA and a regulatory subunit.

The protein localises to the mitochondrion. It localises to the cell membrane. It catalyses the reaction [(1-&gt;3)-beta-D-glucosyl](n) + UDP-alpha-D-glucose = [(1-&gt;3)-beta-D-glucosyl](n+1) + UDP + H(+). Catalytic subunit of the 1,3-beta-glucan synthase. Synthesizes 1,3-beta-glucan, a major structural component of the fungal cell wall. Involved in cell wall synthesis, maintenance and remodeling. The polypeptide is 1,3-beta-glucan synthase component FKS1 (Aspergillus niger (strain ATCC MYA-4892 / CBS 513.88 / FGSC A1513)).